A 571-amino-acid polypeptide reads, in one-letter code: Proline--tRNA ligase (571 aa).

Belongs to the class-II aminoacyl-tRNA synthetase family. ProS type 1 subfamily. Homodimer.

It is found in the cytoplasm. It carries out the reaction tRNA(Pro) + L-proline + ATP = L-prolyl-tRNA(Pro) + AMP + diphosphate. In terms of biological role, catalyzes the attachment of proline to tRNA(Pro) in a two-step reaction: proline is first activated by ATP to form Pro-AMP and then transferred to the acceptor end of tRNA(Pro). As ProRS can inadvertently accommodate and process non-cognate amino acids such as alanine and cysteine, to avoid such errors it has two additional distinct editing activities against alanine. One activity is designated as 'pretransfer' editing and involves the tRNA(Pro)-independent hydrolysis of activated Ala-AMP. The other activity is designated 'posttransfer' editing and involves deacylation of mischarged Ala-tRNA(Pro). The misacylated Cys-tRNA(Pro) is not edited by ProRS. This is Proline--tRNA ligase from Vibrio vulnificus (strain CMCP6).